Consider the following 159-residue polypeptide: MKKMHGFTLIELMIVVAIIGVLASIALMQYQNFVVRSQVTRVLMEAGELRLAVEQCLNDGTTTVGNGANECDPRASGSNIISGASQNPEIVIAANTGVVQFPNPLTEETALTATFNNSAASIIHGKKLIWQRQKSGSWYCHSNAAEKFLPSGCKYDASL.

The propeptide at 1 to 6 (MKKMHG) is leader sequence. Residue Phe-7 is modified to N-methylphenylalanine. The chain crosses the membrane as a helical span at residues 7 to 29 (FTLIELMIVVAIIGVLASIALMQ). Intrachain disulfides connect Cys-56-Cys-71 and Cys-140-Cys-153.

Belongs to the N-Me-Phe pilin family. In terms of assembly, the pili are polar flexible filaments of about 5.4 nanometers diameter and 2.5 micrometers average length; they consist of only a single polypeptide chain arranged in a helical configuration of five subunits per turn in the assembled pilus.

It is found in the fimbrium. The protein localises to the membrane. This is Probable minor fimbrial protein (fimZ) from Dichelobacter nodosus (Bacteroides nodosus).